The primary structure comprises 271 residues: Urease accessory protein UreD (271 aa).

The protein belongs to the UreD family. As to quaternary structure, ureD, UreF and UreG form a complex that acts as a GTP-hydrolysis-dependent molecular chaperone, activating the urease apoprotein by helping to assemble the nickel containing metallocenter of UreC. The UreE protein probably delivers the nickel.

It is found in the cytoplasm. In terms of biological role, required for maturation of urease via the functional incorporation of the urease nickel metallocenter. In Mycolicibacterium smegmatis (strain ATCC 700084 / mc(2)155) (Mycobacterium smegmatis), this protein is Urease accessory protein UreD.